Here is a 333-residue protein sequence, read N- to C-terminus: METSKLFLLSSSLLLVLLATRPCPSLSERCNPKDKKVLLQIKKALDNPYILASWNPNTDCCGWYCVECDLTTHRINSLTIFSGQLSGQIPDAVGDLPFLETLIFRKLSNLTGQIPPAIAKLKHLKMVRLSWTNLSGPVPAFFSELKNLTYLDLSFNNLSGPIPGSLSLLPNLGALHLDRNHLTGPIPDSFGKFAGSTPGLHLSHNQLSGKIPYSFRGFDPNVMDLSRNKLEGDLSIFFNANKSTQIVDFSRNLFQFDLSRVEFPKSLTSLDLSHNKIAGSLPEMMTSLDLQFLNVSYNRLCGKIPVGGKLQSFDYDSYFHNRCLCGAPLQSCK.

The N-terminal stretch at 1–27 (METSKLFLLSSSLLLVLLATRPCPSLS) is a signal peptide. 2 disulfide bridges follow: cysteine 30–cysteine 60 and cysteine 61–cysteine 68. LRR repeat units lie at residues 72–96 (THRI…VGDL), 97–120 (PFLE…AIAK), 121–144 (LKHL…FFSE), 145–169 (LKNL…LSLL), 170–192 (PNLG…SFGK), 194–220 (AGST…GFDP), 221–240 (NVMD…FFNA), 241–263 (NKST…RVEF), 264–288 (PKSL…MTSL), and 290–312 (LQFL…KLQS). Residues asparagine 109, asparagine 133, asparagine 147, and asparagine 157 are each glycosylated (N-linked (GlcNAc...) asparagine). N-linked (GlcNAc...) asparagine glycosylation occurs at asparagine 241. N-linked (GlcNAc...) asparagine glycosylation occurs at asparagine 294. 2 disulfide bridges follow: cysteine 301-cysteine 323 and cysteine 325-cysteine 332.

This sequence belongs to the polygalacturonase-inhibiting protein family.

Its subcellular location is the secreted. The protein resides in the cell wall. It localises to the membrane. Inhibitor of fungal polygalacturonase. It is an important factor for plant resistance to phytopathogenic fungi. The polypeptide is Polygalacturonase inhibitor (pgip) (Vitis vinifera (Grape)).